The primary structure comprises 85 residues: U4-theraphotoxin-Hhn1q (85 aa).

The first 22 residues, 1 to 22 (MKVTLIAILTCAAVLVLHTTAA), serve as a signal peptide directing secretion. The propeptide occupies 23–48 (EELEAESQLMEVGMPDTELAAVDEER). 3 disulfide bridges follow: cysteine 52/cysteine 66, cysteine 56/cysteine 77, and cysteine 71/cysteine 82.

This sequence belongs to the neurotoxin 12 (Hwtx-2) family. 02 (Hwtx-2) subfamily. As to expression, expressed by the venom gland.

It is found in the secreted. Functionally, postsynaptic neurotoxin. The protein is U4-theraphotoxin-Hhn1q of Cyriopagopus hainanus (Chinese bird spider).